An 89-amino-acid chain; its full sequence is Small ribosomal subunit protein uS15 (89 aa).

The protein belongs to the universal ribosomal protein uS15 family. As to quaternary structure, part of the 30S ribosomal subunit. Forms a bridge to the 50S subunit in the 70S ribosome, contacting the 23S rRNA.

One of the primary rRNA binding proteins, it binds directly to 16S rRNA where it helps nucleate assembly of the platform of the 30S subunit by binding and bridging several RNA helices of the 16S rRNA. In terms of biological role, forms an intersubunit bridge (bridge B4) with the 23S rRNA of the 50S subunit in the ribosome. This is Small ribosomal subunit protein uS15 from Chromobacterium violaceum (strain ATCC 12472 / DSM 30191 / JCM 1249 / CCUG 213 / NBRC 12614 / NCIMB 9131 / NCTC 9757 / MK).